The chain runs to 81 residues: MAIKERVGLVVSDKMQKTVVVAIENRAPHPKYGKIVVKTRRYKAHDEDNKCKVGDRVRIQETRPLSKTKRWQVAEILNTKA.

It belongs to the universal ribosomal protein uS17 family. As to quaternary structure, part of the 30S ribosomal subunit.

One of the primary rRNA binding proteins, it binds specifically to the 5'-end of 16S ribosomal RNA. The chain is Small ribosomal subunit protein uS17 from Trichormus variabilis (strain ATCC 29413 / PCC 7937) (Anabaena variabilis).